A 185-amino-acid chain; its full sequence is Peptide methionine sulfoxide reductase MsrA (185 aa).

Cys-12 is a catalytic residue.

It belongs to the MsrA Met sulfoxide reductase family.

It catalyses the reaction L-methionyl-[protein] + [thioredoxin]-disulfide + H2O = L-methionyl-(S)-S-oxide-[protein] + [thioredoxin]-dithiol. It carries out the reaction [thioredoxin]-disulfide + L-methionine + H2O = L-methionine (S)-S-oxide + [thioredoxin]-dithiol. Has an important function as a repair enzyme for proteins that have been inactivated by oxidation. Catalyzes the reversible oxidation-reduction of methionine sulfoxide in proteins to methionine. The polypeptide is Peptide methionine sulfoxide reductase MsrA (Granulibacter bethesdensis (strain ATCC BAA-1260 / CGDNIH1)).